Consider the following 409-residue polypeptide: Immunity-related GTPase family M protein 1 (409 aa).

One can recognise an IRG-type G domain in the interval 75–251 (IPVSIFVTGD…PKLRDTLHKD (177 aa)). Residues 84–91 (DSGNGMSS), 109–113 (TGVVR), and 191–193 (KLD) contribute to the GTP site. Serine 202 carries the post-translational modification Phosphoserine. GTP is bound at residue 232 to 234 (SSL). Residue lysine 270 forms a Glycyl lysine isopeptide (Lys-Gly) (interchain with G-Cter in ubiquitin) linkage. The alpha-K amphipathic helix stretch occupies residues 350-374 (KLRLMTCAIVNAFFRLLRFLPCVCC).

It belongs to the TRAFAC class dynamin-like GTPase superfamily. IRG family. As to quaternary structure, interacts with ULK1; promoting the coassembly of ULK1 and BECN1. Interacts with BECN1; enhancing BECN1-interacting partners and influencing the composition of the BECN1 complex. Interacts with ATG16L1. Interacts with NOD2; promoting Irgm1 'Lys-63'-linked polyubiquitination, which is required for interactions with the core autophagy factors. Interacts with STX17; promoting STX17 recruitment to autophagosomes. Interacts with ATG8 proteins (GABARAP, GABARAPL1, GABARAPL2, MAP1LC3A, MAP1LC3B and MAP1LC3C); promoting STX17 recruitment to autophagosomes. Interacts with TFEB; promoting association between TFEB and PPP3CB and TFEB dephosphorylation. Interacts with PPP3CB; promoting association between TFEB and PPP3CB and TFEB dephosphorylation. Interacts with NLRP3; preventing NLRP3 inflammasome assembly and promoting SQSTM1/p62-dependent autophagic degradation of NLRP3. Interacts with CGAS; promoting SQSTM1/p62-dependent autophagic degradation of CGAS. Interacts with RIGI/RIG-I; promoting SQSTM1/p62-dependent autophagic degradation of RIGI/RIG-I. Interacts with NOD1; promoting SQSTM1/p62-dependent autophagic degradation of RIGI/RIG-I. Interacts with NOD2; promoting SQSTM1/p62-dependent autophagic degradation of RIGI/RIG-I. Interacts with RIPK2; promoting SQSTM1/p62-dependent autophagic degradation of RIGI/RIG-I. Interacts with PIK3CA. Palmitoylated on C-terminal Cys residues. Palmitoylation, together with the alpha-K amphipathic helix, which binds phosphatidylinositol, mediate binding to membranes. Post-translationally, ubiquitinated via 'Lys-63'-linked polyubiquitination in a NOD2-dependent process. 'Lys-63'-linked polyubiquitination is required for interactions with the core autophagy factors. Ubiquitination at Lys-270 by the DCX(WDR77) complex, also named CLR4(WDR77) complex, in intestinal cells, leading to its degradation by the proteasome. As to expression, expressed in lung and primary macrophages.

The protein localises to the golgi apparatus membrane. The protein resides in the cell membrane. It is found in the cytoplasmic vesicle. Its subcellular location is the phagosome membrane. It localises to the autophagosome membrane. The protein localises to the lysosome membrane. The protein resides in the late endosome membrane. It is found in the mitochondrion membrane. Its subcellular location is the lipid droplet. It localises to the cell projection. The protein localises to the phagocytic cup. The catalysed reaction is GTP + H2O = GDP + phosphate + H(+). Its function is as follows. Immunity-related GTPase that plays important roles in innate immunity and inflammatory response. Acts as a dynamin-like protein that binds to intracellular membranes and promotes remodeling and trafficking of those membranes. Required for clearance of acute protozoan and bacterial infections by interacting with autophagy and lysosome regulatory proteins, thereby promoting the fusion of phagosomes with lysosomes for efficient degradation of cargo including microbes. Regulates selective autophagy, including xenophagy and mitophagy, both directly and indirectly. Directly regulates autophagy by acting as a molecular adapter that promotes the coassembly of the core autophagy machinery to mediate antimicrobial defense: Irgm1 (1) activates AMPK, which in turn phosphorylates ULK1 and BECN1 to induce autophagy, (2) promotes the coassembly of ULK1 and BECN1, enhancing BECN1-interacting partners and (3) influences the composition of the BECN1 complex, by competing with the negative regulators BCL2 and RUBCN, to trigger autophagy. Also activates autophagy by promoting recruitment of STX17 to autophagosomes. In collaboration with ATG8 proteins, regulate lysosomal biogenesis, a fundamental process for any autophagic pathway, by promoting TFEB dephosphorylation. Also modulates autophagy by assisting with autophagosome formation and preventing lysosomal deacidification. Regulates autophagy by affecting mitochondrial fusion and fission. Also involved in M1 macrophage activation for the production of proinflammatory cytokines. While activating autophagy, acts as a key negative regulator of the inflammatory and interferon responses both by (1) promoting mitophagy and (2) mediating autophagy-dependent degradation of effectors of the inflammatory response. Promotes degradation of damaged and IFNG/IFN-gamma-stressed mitochondria via mitophagy, preventing cytosolic release of ligands that activate inflammation. Negatively regulates interferon-signaling in hematopoietic stem cells, preserving hematopoietic stem cell number and function. Promotes expansion of activated CD4(+) T-cells by inhibiting IFNG/IFN-gamma signaling, thereby preventing Ifng-mediated cell death of CD4(+) T-cells. Acts as a suppressor of inflammation by promoting recruitment of inflammation effectors, such as CGAS, RIGI/RIG-I and NLRP3, to autophagosome membranes, leading to their SQSTM1/p62-dependent autophagic degradation. Also directly inhibits assembly of the NLRP3 inflammasome by preventing the association between NLRP3 and PYCARD. Acts as a negative regulator of antiviral innate immune response by suppressing the RIPK2-dependent pro-inflammatory response: mediates recruitment of RIPosomes, composed of RIPK2 and NOD1 or NOD2, to autophagosome membranes, promoting their SQSTM1/p62-dependent autophagic degradation. The polypeptide is Immunity-related GTPase family M protein 1 (Mus musculus (Mouse)).